The primary structure comprises 200 residues: MFTYFRGELIEASPDEAVIEVSGVGYLLSISATTYRQLPEPGREVLVLAHLHVKEDLMQLFGFLEEEERQLFRLLLSISGVGPKLALAILSGLQVHEIQEAIVSNMPERLFEITGVGKKTAARIVLELRDRILKLRPSGGTKSVSRLSESSMRDDAVNALVTLGFLRSVAQKAVTESLTSLRNPQVEDLVRDALLTIRTP.

The tract at residues 1–64 (MFTYFRGELI…EDLMQLFGFL (64 aa)) is domain I. Residues 65-143 (EEEERQLFRL…KLRPSGGTKS (79 aa)) form a domain II region. A flexible linker region spans residues 144 to 148 (VSRLS). A domain III region spans residues 148–200 (SESSMRDDAVNALVTLGFLRSVAQKAVTESLTSLRNPQVEDLVRDALLTIRTP).

The protein belongs to the RuvA family. As to quaternary structure, homotetramer. Forms an RuvA(8)-RuvB(12)-Holliday junction (HJ) complex. HJ DNA is sandwiched between 2 RuvA tetramers; dsDNA enters through RuvA and exits via RuvB. An RuvB hexamer assembles on each DNA strand where it exits the tetramer. Each RuvB hexamer is contacted by two RuvA subunits (via domain III) on 2 adjacent RuvB subunits; this complex drives branch migration. In the full resolvosome a probable DNA-RuvA(4)-RuvB(12)-RuvC(2) complex forms which resolves the HJ.

The protein resides in the cytoplasm. Its function is as follows. The RuvA-RuvB-RuvC complex processes Holliday junction (HJ) DNA during genetic recombination and DNA repair, while the RuvA-RuvB complex plays an important role in the rescue of blocked DNA replication forks via replication fork reversal (RFR). RuvA specifically binds to HJ cruciform DNA, conferring on it an open structure. The RuvB hexamer acts as an ATP-dependent pump, pulling dsDNA into and through the RuvAB complex. HJ branch migration allows RuvC to scan DNA until it finds its consensus sequence, where it cleaves and resolves the cruciform DNA. In Chlorobium phaeobacteroides (strain BS1), this protein is Holliday junction branch migration complex subunit RuvA.